The primary structure comprises 240 residues: MVKPKYQRVVLKLSGEALAGEDGFGIKPPVIKEIVQEIKEVHELGIEMAIVVGGGNIWRGQIGAQMGMERAQADYMGMLATVMNALALQDTLENLGVPTRVQTSIEMRQIAEPYIRRRAERHLEKGRVVIFAGGTGNPYFSTDTTAALRAAEVDADVILMAKNNVDGVYSADPRVDETATKFEELTHLDVISKGLQVMDSTASSLSMDNDIPLVVFNLNEAGNIRRAILGENIGTTVRGK.

Residue 12–15 coordinates ATP; it reads KLSG. The segment at 20 to 25 is involved in allosteric activation by GTP; the sequence is GEDGFG. G54 is a UMP binding site. Residues G55 and R59 each coordinate ATP. UMP-binding positions include D74 and 135-142; that span reads TGNPYFST. ATP contacts are provided by N163, Y169, and D172.

It belongs to the UMP kinase family. As to quaternary structure, homohexamer.

Its subcellular location is the cytoplasm. The enzyme catalyses UMP + ATP = UDP + ADP. Its pathway is pyrimidine metabolism; CTP biosynthesis via de novo pathway; UDP from UMP (UMPK route): step 1/1. Allosterically activated by GTP. Probably inhibited by UTP. Its function is as follows. Catalyzes the reversible phosphorylation of UMP to UDP. This is Uridylate kinase (pyrH) from Enterococcus faecalis (strain ATCC 700802 / V583).